Reading from the N-terminus, the 290-residue chain is UPF0761 membrane protein YihY (290 aa).

6 helical membrane-spanning segments follow: residues 44-64, 104-124, 140-160, 183-203, 210-230, and 244-264; these read LLSLVPLIAVVFALFAAFPMF, VGACGLIVTALLLMYAIDSAL, FAVYWMILTLGPLLAGASLAI, ILPLLLSWISFWLLYSIVPTT, ALVGAFVAALLFESGKKGFAL, and VLAVIPILFVWVYWTWCIVLL.

The protein belongs to the UPF0761 family.

The protein localises to the cell inner membrane. The sequence is that of UPF0761 membrane protein YihY from Salmonella paratyphi B (strain ATCC BAA-1250 / SPB7).